Reading from the N-terminus, the 240-residue chain is ATP synthase subunit a (240 aa).

Transmembrane regions (helical) follow at residues tryptophan 41 to isoleucine 61, phenylalanine 92 to isoleucine 112, serine 121 to phenylalanine 141, phenylalanine 152 to phenylalanine 172, valine 191 to valine 211, and leucine 212 to phenylalanine 232.

The protein belongs to the ATPase A chain family. F-type ATPases have 2 components, CF(1) - the catalytic core - and CF(0) - the membrane proton channel. CF(1) has five subunits: alpha(3), beta(3), gamma(1), delta(1), epsilon(1). CF(0) has three main subunits: a(1), b(2) and c(9-12). The alpha and beta chains form an alternating ring which encloses part of the gamma chain. CF(1) is attached to CF(0) by a central stalk formed by the gamma and epsilon chains, while a peripheral stalk is formed by the delta and b chains.

The protein localises to the cell inner membrane. Its function is as follows. Key component of the proton channel; it plays a direct role in the translocation of protons across the membrane. The chain is ATP synthase subunit a from Desulfotalea psychrophila (strain LSv54 / DSM 12343).